We begin with the raw amino-acid sequence, 195 residues long: Heat shock protein beta-8 (195 aa).

Ser56 is subject to Phosphoserine. Thr62 carries the post-translational modification Phosphothreonine. 2 positions are modified to asymmetric dimethylarginine: Arg70 and Arg77. A sHSP domain is found at 73-184 (TATARFGVPA…TFGESSFNNE (112 aa)). A disordered region spans residues 175 to 195 (TFGESSFNNELPQDSQEVTCT). Positions 176–195 (FGESSFNNELPQDSQEVTCT) are enriched in polar residues.

This sequence belongs to the small heat shock protein (HSP20) family. As to quaternary structure, monomer. Forms a ternary complex with BAG3 and HSPA1A. Component of the chaperone-assisted selective autophagy (CASA) complex consisting of BAG3, HSPA8/HSC70, HSPB8 and STUB1/CHIP. Interacts with HSPB1. Interacts with DNAJB6. Interacts with BAG3. Post-translationally, phosphorylated.

It localises to the cytoplasm. It is found in the nucleus. Its function is as follows. Involved in the chaperone-assisted selective autophagy (CASA), a crucial process for protein quality control, particularly in mechanical strained cells and tissues such as muscle. Displays temperature-dependent chaperone activity. This is Heat shock protein beta-8 (HSPB8) from Macaca mulatta (Rhesus macaque).